We begin with the raw amino-acid sequence, 92 residues long: Small ribosomal subunit protein uS19 (92 aa).

It belongs to the universal ribosomal protein uS19 family.

In terms of biological role, protein S19 forms a complex with S13 that binds strongly to the 16S ribosomal RNA. This chain is Small ribosomal subunit protein uS19, found in Geobacillus sp. (strain WCH70).